An 89-amino-acid chain; its full sequence is Cell division topological specificity factor (89 aa).

The protein belongs to the MinE family.

In terms of biological role, prevents the cell division inhibition by proteins MinC and MinD at internal division sites while permitting inhibition at polar sites. This ensures cell division at the proper site by restricting the formation of a division septum at the midpoint of the long axis of the cell. The sequence is that of Cell division topological specificity factor from Janthinobacterium sp. (strain Marseille) (Minibacterium massiliensis).